The chain runs to 270 residues: Putative phosphoenolpyruvate synthase regulatory protein (270 aa).

150–157 provides a ligand contact to ADP; it reads GVSRCGKT.

Belongs to the pyruvate, phosphate/water dikinase regulatory protein family. PSRP subfamily.

The catalysed reaction is [pyruvate, water dikinase] + ADP = [pyruvate, water dikinase]-phosphate + AMP + H(+). The enzyme catalyses [pyruvate, water dikinase]-phosphate + phosphate + H(+) = [pyruvate, water dikinase] + diphosphate. Its function is as follows. Bifunctional serine/threonine kinase and phosphorylase involved in the regulation of the phosphoenolpyruvate synthase (PEPS) by catalyzing its phosphorylation/dephosphorylation. The polypeptide is Putative phosphoenolpyruvate synthase regulatory protein (Shewanella amazonensis (strain ATCC BAA-1098 / SB2B)).